The chain runs to 625 residues: Mitochondrial Rho GTPase 1 (625 aa).

Over M1–S601 the chain is Cytoplasmic. Positions D3–V170 constitute a Miro 1 domain. GTP contacts are provided by residues G16–T23, D62–K66, and N123–D126. EF-hand domains lie at R188–I223 and E308–P343. D201, D203, D205, Y207, E212, D321, D323, D325, C327, and E332 together coordinate Ca(2+). In terms of domain architecture, Miro 2 spans H420–L625. Residues G433–T440, R470–E474, and T537–E540 contribute to the GTP site. Residues N602–L622 form a helical; Anchor for type IV membrane protein membrane-spanning segment. Residues K623–L625 are Mitochondrial intermembrane-facing.

Belongs to the mitochondrial Rho GTPase family.

It localises to the mitochondrion outer membrane. Its function is as follows. Mitochondrial GTPase involved in mitochondrial trafficking. Probably involved in control of anterograde transport of mitochondria and their subcellular distribution. Plays a role in maintaining mitochondrial morphology. This chain is Mitochondrial Rho GTPase 1, found in Caenorhabditis elegans.